Reading from the N-terminus, the 320-residue chain is Olfactory receptor 52W1 (320 aa).

Residues 1–30 lie on the Extracellular side of the membrane; it reads MAETLQLNSTFLHPNFFILTGFPGLGSAQT. Residue Asn-8 is glycosylated (N-linked (GlcNAc...) asparagine). The helical transmembrane segment at 31 to 51 threads the bilayer; that stretch reads WLTLVFGPIYLLALLGNGALP. At 52–59 the chain is on the cytoplasmic side; that stretch reads AVVWIDST. The helical transmembrane segment at 60–80 threads the bilayer; the sequence is LHQPMFLLLAILAATDLGLAT. At 81 to 104 the chain is on the extracellular side; the sequence is SIAPGLLAVLWLGPRSVPYAVCLV. A helical membrane pass occupies residues 105-125; that stretch reads QMFFVHALTAMESGVLLAMAC. Topologically, residues 126–144 are cytoplasmic; sequence DRAAAIGRPLHYPVLVTKA. The helical transmembrane segment at 145–165 threads the bilayer; sequence CVGYAALALALKAVAIVVPFP. Over 166-201 the chain is Extracellular; it reads LLVAKFEHFQAKTIGHTYCAHMAVVELVVGNTQATN. Residues 202-222 form a helical membrane-spanning segment; sequence LYGLALSLAISGMDILGITGS. The Cytoplasmic segment spans residues 223 to 242; the sequence is YGLIAHAVLQLPTREAHAKA. The helical transmembrane segment at 243–263 threads the bilayer; sequence FGTCSSHICVILAFYIPGLFS. Topologically, residues 264–279 are extracellular; that stretch reads YLTHRFGHHTVPKPVH. The chain crosses the membrane as a helical span at residues 280 to 300; it reads ILLSNIYLLLPPALNPLIYGA. The Cytoplasmic portion of the chain corresponds to 301-320; that stretch reads RTKQIRDRLLETFTFRKSPL.

This sequence belongs to the G-protein coupled receptor 1 family.

The protein resides in the cell membrane. Odorant receptor. This chain is Olfactory receptor 52W1 (OR52W1), found in Homo sapiens (Human).